A 1271-amino-acid polypeptide reads, in one-letter code: Diacylglycerol kinase kappa (1271 aa).

Low complexity predominate over residues 1–15 (MDRGAAAAQGTAPPQ). Residues 1–160 (MDRGAAAAQG…PEPTPEPVTE (160 aa)) form a disordered region. Over residues 23–44 (SPEPPPPWPPPPPPPAPPPAPP) the composition is skewed to pro residues. 33 repeat units span residues 48–51 (EASP), 52–55 (EPIP), 56–59 (EPCP), 60–63 (ELAP), 64–67 (GPCP), 68–71 (EATS), 72–75 (ESAT), 76–79 (ELYT), 80–83 (EPTP), 84–87 (EPAT), 88–91 (EPAS), 92–95 (EPAP), 96–99 (EPAT), 100–103 (EPAP), 104–107 (EPAT), 108–111 (EPAP), 112–115 (EPAP), 116–119 (EPAT), 120–123 (ESAP), 124–127 (EPTP), 128–131 (EPAL), 132–135 (ESVP), 136–139 (EPAP), 140–143 (ELTP), 144–147 (EVAP), 148–151 (ELAP), 152–155 (EPTP), 156–159 (EPVT), 160–163 (ELAP), 164–167 (EFCP), 168–171 (EAAP), 172–175 (EFRP), and 176–179 (SPAP). The interval 48 to 179 (EASPEPIPEP…APEFRPSPAP (132 aa)) is 33 X 4 AA approximate tandem repeats of E-P-A-P. Residues 52–66 (EPIPEPCPELAPGPC) show a composition bias toward pro residues. Tyr-78 carries the phosphotyrosine modification. Residues 82–116 (TPEPATEPASEPAPEPATEPAPEPATEPAPEPAPE) show a composition bias toward pro residues. Residues 139–149 (PELTPEVAPEL) show a composition bias toward low complexity. Residues 190–209 (ERGLKTSPSPSPSPSPRTPM) form a disordered region. Residues 216–309 (KILKEGPMLK…WINIIKTIQQ (94 aa)) enclose the PH domain. 2 consecutive Phorbol-ester/DAG-type zinc fingers follow at residues 327–377 (MHCW…SKDC) and 398–449 (PHQW…SKEC). The DAGKc domain maps to 487 to 622 (ACSCPLLIFI…LDRWSVMIRE (136 aa)). Disordered stretches follow at residues 805 to 825 (DDPE…GTLS) and 1252 to 1271 (RHRE…RSQL). The tract at residues 1199-1268 (PIFVPEEKSS…EGDDPLTPSR (70 aa)) is required for localization to the plasma membrane.

The protein belongs to the eukaryotic diacylglycerol kinase family. Does not form homooligomers. Post-translationally, phosphorylated at Tyr-78 by some member of the SRC family in response to H(2)O(2). Expressed in testis, and to a lesser extent in placenta.

Its subcellular location is the cell membrane. It carries out the reaction a 1,2-diacyl-sn-glycerol + ATP = a 1,2-diacyl-sn-glycero-3-phosphate + ADP + H(+). The catalysed reaction is 1,2-di-(9Z-octadecenoyl)-sn-glycerol + ATP = 1,2-di-(9Z-octadecenoyl)-sn-glycero-3-phosphate + ADP + H(+). It functions in the pathway lipid metabolism; glycerolipid metabolism. With respect to regulation, inhibited in response to H(2)O(2). Diacylglycerol kinase that converts diacylglycerol/DAG into phosphatidic acid/phosphatidate/PA and regulates the respective levels of these two bioactive lipids. Thereby, acts as a central switch between the signaling pathways activated by these second messengers with different cellular targets and opposite effects in numerous biological processes. The protein is Diacylglycerol kinase kappa of Homo sapiens (Human).